Here is a 252-residue protein sequence, read N- to C-terminus: tRNA uridine(34) hydroxylase (252 aa).

The Rhodanese domain maps to 129-223 (QGRPVVMLDT…YFEETGGKGF (95 aa)). The Cysteine persulfide intermediate role is filled by C183.

It belongs to the TrhO family.

The catalysed reaction is uridine(34) in tRNA + AH2 + O2 = 5-hydroxyuridine(34) in tRNA + A + H2O. Its function is as follows. Catalyzes oxygen-dependent 5-hydroxyuridine (ho5U) modification at position 34 in tRNAs. The polypeptide is tRNA uridine(34) hydroxylase (Bordetella petrii (strain ATCC BAA-461 / DSM 12804 / CCUG 43448)).